The following is a 976-amino-acid chain: Vacuolar membrane protease (976 aa).

Residues 1 to 51 (MPLSTGLTLSSLNVMEKADNHYNMMTKQPPALSPVDMVSSRRGFNPIAFTP) are Cytoplasmic-facing. The chain crosses the membrane as a helical span at residues 52 to 72 (WPVTILSSLVYLAFIIPIIVV). The Vacuolar segment spans residues 73–399 (HHLVPPAPKE…DNGNDGKLNN (327 aa)). N-linked (GlcNAc...) asparagine glycans are attached at residues N147 and N150. H206 and D218 together coordinate Zn(2+). Residue E252 is the Proton acceptor of the active site. 3 residues coordinate Zn(2+): E253, E278, and H351. A helical membrane pass occupies residues 400–420 (GAGTLGVWFDFYGSSFAVFEL). At 421–427 (NTLFGHS) the chain is on the cytoplasmic side. A helical transmembrane segment spans residues 428-448 (VALLVVAPLLLIATCVTLYTL). At 449-477 (DKMYMFSMYTYLSESGGQVSLYGLRGLFR) the chain is on the vacuolar side. A helical transmembrane segment spans residues 478 to 498 (FPLILGISTALTIGLAFLLMK). Residues 499-519 (ANPFIIYSSPYAVWNPSALHR) lie on the Cytoplasmic side of the membrane. The helical transmembrane segment at 520–540 (AYAFTWMFGMMWVLLVIATVY) threads the bilayer. Residues 541–550 (QKQHGIASSY) lie on the Vacuolar side of the membrane. Residues 551–571 (FIVFYFAGVSIATWISYLELF) form a helical membrane-spanning segment. The Cytoplasmic segment spans residues 572-675 (GLPTTQDYAR…HRLEQRWSIN (104 aa)). The segment at 590 to 633 (TPSSDSRLLAPSADELPPSGSAAGHDFNPEDVEDEEPTESTSLL) is disordered. The segment covering 618–627 (PEDVEDEEPT) has biased composition (acidic residues). Residues 676-696 (LISSAWILQFLFVAPIVIILL) traverse the membrane as a helical segment. At 697–718 (GQLGLFLTSATYQIGADGGSQL) the chain is on the vacuolar side. Residues 719-739 (VIYVGIAVLSVLILLPLFPFI) form a helical membrane-spanning segment. The Cytoplasmic portion of the chain corresponds to 740-745 (HRFTYH). The chain crosses the membrane as a helical span at residues 746–766 (IPTFLLFVLIGTLVYNLTAFP). Residues 767–976 (FSHSNRLKVA…LVEGSHSFKL (210 aa)) are Vacuolar-facing. An N-linked (GlcNAc...) asparagine glycan is attached at N848.

This sequence belongs to the peptidase M28 family. Zn(2+) serves as cofactor.

The protein resides in the vacuole membrane. Functionally, may be involved in vacuolar sorting and osmoregulation. This Arthroderma otae (strain ATCC MYA-4605 / CBS 113480) (Microsporum canis) protein is Vacuolar membrane protease.